The primary structure comprises 987 residues: MASPRSAGGVGGGGGGGGGSGGAAAGDDAIWSKLREAGFDEESLKRRDKAALIAYISRLESEIYQYQHNLGLVLMERKELTSKHEQLRAASESAEIMHKRERAAQQSALAEARKKEENLKKSLGIQKECVANLEKALHDMRGETAETKVSYESKLAEALQLMEAAHKKFDEAEEKLLLAKSLEAESIRTHNAALRSLHDIDDREDQLRRDRISCELENEAKEKEISLQRKSLNDMKKILHEKEEVLLKEQALLNQRDENILERLAYVTHSEKRVEEEKNILEAERKVLLEEKYKLELKMEAIVSREEALIQKESLLDKRESELLILQETIASKERAEIERLNQEQAIALERRKHDFESEMANKQMSFDAAMEVTRNALHQRECALSEQESVVVQRSQNLDLQLAELASKEKALAGRSDELKEEEEKLLLHREAIHNELQKEREEIQRIKSDLEKEKAFFEEEKREAIQAQQDLAITQADRDELLTLQMKLKEEIDSLRAQKRELMADADRLQAEKERFEIEWELIDEKKEELQKEAIRIAEERRAITEYLKNESDIIKQEKDNLRVQFKSNSETLSREHKEFMSKMQQEHASWLSKIQQERQDLKRDIDIQRVELLNSAKARQMEIDSYLREREEEFEQKKAKELEHINSQKEMINTKLEHVAVELQKLKDERKEATLERERREQELSEIKGTIEALNNQREKLQEQRKLLHSDREAITVQIQQLNVLEELKIDSENKQLSLLQHDKSKLGSDINVKDNHHDNSHSSPKQRFGRKLDLSPVSTPISWVRKCAQVIFKRSPEKSASHDQFVQNGVPKKVGDSVDVEDVNLDFAKVGQKRLNHLVSCDQTEVLEPKRKHRRSTIQKVNGGEITSNCLSALEEKCSKNEHDEAPLGLSNTCKEHEYGDKGPENLTKPGEPASSVDVPYVNGIVDNSDSVQEEPSVEATVSATETSNVDGPEDNNDSDEEDEEEEEEKTSSAKKLWRFLIT.

Positions 1-25 are disordered; the sequence is MASPRSAGGVGGGGGGGGGSGGAAA. Residues 8–24 show a composition bias toward gly residues; sequence GGVGGGGGGGGGSGGAA. Coiled-coil stretches lie at residues 403 to 545 and 594 to 717; these read LAEL…ERRA and LSKI…DREA. Basic and acidic residues-rich tracts occupy residues 752–764 and 898–908; these read SDIN…HDNS and CKEHEYGDKGP. Disordered stretches follow at residues 752-775 and 887-987; these read SDIN…FGRK and HDEA…FLIT. The span at 944 to 954 shows a compositional bias: polar residues; that stretch reads ATVSATETSNV. Positions 956 to 973 are enriched in acidic residues; that stretch reads GPEDNNDSDEEDEEEEEE.

This sequence belongs to the CRWN family. In terms of assembly, interacts with SWI3C.

It is found in the nucleus matrix. Its subcellular location is the nucleus lamina. Functionally, architectural component of nuclear structure that plays different roles in controlling nuclear size and morphology. Involved in the modification of chromatin accessibility by interacting with SWI3C, a component of the chromatin-remodeling complex, to thus reduce the suppression effect of the complex. Acts as positive regulator of drought resistance and modulates root growth. Positively regulates the expression of genes related to root growth and drought resistance. The polypeptide is Nuclear matrix constituent protein 1b (Oryza sativa subsp. japonica (Rice)).